The sequence spans 336 residues: MKIAIVNDMPMAIEALRRALAFEPAHQIIWVASNGADAVQRCVEQTPDLILMDLIMPVMDGVEATRRIMAETPCAIVIVTVDHEQNMRRVFEAMGHGALDVVDTPAIGGPNPKEAAAPLLRKILNIDWLIGQRVGLERVAATPRAAPSRRDRLVAIGSSAGGPAALEILLKALPVSFPAAIVLVQHVDQVFAAGMADWLSSASGLPVRLAREGETPQPGVVLLAGTNHHIRLLKDGTLAYTAEPVNEVYRPSIDVFFESVTRYWSGEAIGVLLTGMGRDGAQGLKAMRERGFLTIAQDQASSAVYGMPKAAAAIDAAVEIRPLPAIAPRLIEVFTQ.

Residues 2–119 (KIAIVNDMPM…PNPKEAAAPL (118 aa)) form the Response regulatory domain. Residue Asp-53 is modified to 4-aspartylphosphate. The CheB-type methylesterase domain occupies 147–336 (PSRRDRLVAI…APRLIEVFTQ (190 aa)). Active-site residues include Ser-159, His-186, and Asp-279.

The protein belongs to the CheB family. Post-translationally, phosphorylated by CheA. Phosphorylation of the N-terminal regulatory domain activates the methylesterase activity.

It localises to the cytoplasm. It catalyses the reaction [protein]-L-glutamate 5-O-methyl ester + H2O = L-glutamyl-[protein] + methanol + H(+). It carries out the reaction L-glutaminyl-[protein] + H2O = L-glutamyl-[protein] + NH4(+). Involved in chemotaxis. Part of a chemotaxis signal transduction system that modulates chemotaxis in response to various stimuli. Catalyzes the demethylation of specific methylglutamate residues introduced into the chemoreceptors (methyl-accepting chemotaxis proteins or MCP) by CheR. Also mediates the irreversible deamidation of specific glutamine residues to glutamic acid. The sequence is that of Protein-glutamate methylesterase/protein-glutamine glutaminase 2 from Pseudomonas syringae pv. syringae (strain B728a).